We begin with the raw amino-acid sequence, 90 residues long: Actobindin-B/C (90 aa).

WH2 domains lie at 4 to 21 (TANP…LKHA) and 40 to 57 (DHSS…LKHV). The tract at residues 57–90 (VETQDRSAPVTEGATVKSNNHSALLGEIKSKAQE) is disordered.

As to quaternary structure, monomer.

Functionally, is able to bind two actin monomers at high concentrations of G-actin. Inhibits actin polymerization by sequestering G-actin and stabilizing actin dimers. The sequence is that of Actobindin-B/C (abnB) from Dictyostelium discoideum (Social amoeba).